The primary structure comprises 356 residues: Heme A synthase (356 aa).

5 consecutive transmembrane segments (helical) span residues 24 to 44 (IAIW…VGGV), 106 to 126 (FHRL…VYFM), 139 to 159 (LLGI…MVMS), 174 to 194 (AHLG…TGLI), and 214 to 234 (AWML…VAGI). Heme is bound at residue His-276. A run of 3 helical transmembrane segments spans residues 278–298 (LIAW…KQLS), 309–329 (LLLL…LLSV), and 331–351 (LTFA…ALWV). His-337 contacts heme.

This sequence belongs to the COX15/CtaA family. Type 2 subfamily. As to quaternary structure, interacts with CtaB. Heme b is required as a cofactor.

The protein resides in the cell membrane. The enzyme catalyses Fe(II)-heme o + 2 A + H2O = Fe(II)-heme a + 2 AH2. It participates in porphyrin-containing compound metabolism; heme A biosynthesis; heme A from heme O: step 1/1. Functionally, catalyzes the conversion of heme O to heme A by two successive hydroxylations of the methyl group at C8. The first hydroxylation forms heme I, the second hydroxylation results in an unstable dihydroxymethyl group, which spontaneously dehydrates, resulting in the formyl group of heme A. The sequence is that of Heme A synthase from Nitrosomonas eutropha (strain DSM 101675 / C91 / Nm57).